The sequence spans 309 residues: Oxygen-dependent coproporphyrinogen-III oxidase (309 aa).

Serine 94 is a substrate binding site. 2 residues coordinate a divalent metal cation: histidine 98 and histidine 108. Histidine 108 functions as the Proton donor in the catalytic mechanism. Substrate is bound at residue 110–112; that stretch reads NVR. Histidine 147 and histidine 177 together coordinate a divalent metal cation. Residues 242 to 277 form an important for dimerization region; that stretch reads YVEFNLVWDRGTLFGLQTGGRTESILMSLPPLVRWE. Substrate is bound at residue 260-262; that stretch reads GGR.

This sequence belongs to the aerobic coproporphyrinogen-III oxidase family. Homodimer. A divalent metal cation is required as a cofactor.

It is found in the cytoplasm. It catalyses the reaction coproporphyrinogen III + O2 + 2 H(+) = protoporphyrinogen IX + 2 CO2 + 2 H2O. It functions in the pathway porphyrin-containing compound metabolism; protoporphyrin-IX biosynthesis; protoporphyrinogen-IX from coproporphyrinogen-III (O2 route): step 1/1. Involved in the heme biosynthesis. Catalyzes the aerobic oxidative decarboxylation of propionate groups of rings A and B of coproporphyrinogen-III to yield the vinyl groups in protoporphyrinogen-IX. This is Oxygen-dependent coproporphyrinogen-III oxidase from Yersinia pseudotuberculosis serotype O:1b (strain IP 31758).